Consider the following 881-residue polypeptide: Envelope glycoprotein gp160 (881 aa).

A signal peptide spans 1–19 (MGCLGNQLLIAILLLSVYG). Topologically, residues 20–696 (IYCTQYVTVF…ASWIKYIQYG (677 aa)) are extracellular. N-linked (GlcNAc...) asparagine; by host glycosylation occurs at Asn37. A disulfide bridge connects residues Cys44 and Cys57. N-linked (GlcNAc...) asparagine; by host glycosylation is found at Asn70, Asn114, Asn148, Asn158, Asn186, Asn200, Asn204, Asn214, Asn246, Asn249, Asn280, Asn286, Asn297, Asn308, Asn318, Asn373, and Asn379. Intrachain disulfides connect Cys101–Cys222, Cys108–Cys213, Cys113–Cys170, Cys235–Cys265, and Cys245–Cys257. Residues 113 to 169 (CNKSETDRWGLTKSSTTITTAAPTSAPVSEKIDMVNETSSCIAQNNCTGLEQEQMIS) are V1. Residues 170–213 (CKFTMTGLKRDKTKEYNETWYSTDLVCEQGNSTDNESRCYMNHC) form a V2 region. The segment at 313 to 345 (CRRPGNKTVLPVTIMSGLVFHSQPLTDRPKQAW) is V3. Cys313 and Cys346 are disulfide-bonded. Cystine bridges form between Cys397–Cys461 and Cys404–Cys434. Residues 404–434 (CKMNWFLNWVEDRDVTTQRPKERHRRNYVPC) form a V4 region. 2 N-linked (GlcNAc...) asparagine; by host glycosylation sites follow: Asn462 and Asn478. The tract at residues 477–484 (GNQTSITM) is V5. Residues 528 to 548 (GVFVLGFLGFLATAGSAMGAA) form a fusion peptide region. The segment at 591-607 (LQTRVTAIEKYLEDQAQ) is immunosuppression. Asn627, Asn636, and Asn652 each carry an N-linked (GlcNAc...) asparagine; by host glycan. A coiled-coil region spans residues 636–668 (NDTWQEWERKVDFLEENITALLEEAQIQQEKNM). The segment at 673-694 (KLNSWDVFGNWFDLASWIKYIQ) is MPER; binding to GalCer. Residues 697-717 (IYVVVGVILLRIVIYIVQMLA) traverse the membrane as a helical segment. The Cytoplasmic segment spans residues 718–881 (KLRQGYRPVF…IRQGLELTLL (164 aa)). The YXXV motif; contains endocytosis signal signature appears at 723–726 (YRPV). Residues 737–761 (THTQQDPALPTREGKEGDGGEGGGN) are disordered. Cys789 carries S-palmitoyl cysteine; by host lipidation. The Di-leucine internalization motif signature appears at 880 to 881 (LL).

The mature envelope protein (Env) consists of a homotrimer of non-covalently associated gp120-gp41 heterodimers. The resulting complex protrudes from the virus surface as a spike. Interacts with host CD4 and CCR5. Gp120 also interacts with the C-type lectins CD209/DC-SIGN and CLEC4M/DC-SIGNR (collectively referred to as DC-SIGN(R)). In terms of assembly, the mature envelope protein (Env) consists of a homotrimer of non-covalently associated gp120-gp41 heterodimers. The resulting complex protrudes from the virus surface as a spike. Post-translationally, specific enzymatic cleavages in vivo yield mature proteins. Envelope glycoproteins are synthesized as an inactive precursor that is heavily N-glycosylated and processed likely by host cell furin in the Golgi to yield the mature SU and TM proteins. The cleavage site between SU and TM requires the minimal sequence [KR]-X-[KR]-R. Palmitoylation of the transmembrane protein and of Env polyprotein (prior to its proteolytic cleavage) is essential for their association with host cell membrane lipid rafts. Palmitoylation is therefore required for envelope trafficking to classical lipid rafts, but not for viral replication.

Its subcellular location is the virion membrane. The protein resides in the host cell membrane. It localises to the host endosome membrane. Its function is as follows. The surface protein gp120 (SU) attaches the virus to the host lymphoid cell by binding to the primary receptor CD4. This interaction induces a structural rearrangement creating a high affinity binding site for a chemokine coreceptor like CCR5. This peculiar 2 stage receptor-interaction strategy allows gp120 to maintain the highly conserved coreceptor-binding site in a cryptic conformation, protected from neutralizing antibodies. These changes are transmitted to the transmembrane protein gp41 and are thought to activate its fusogenic potential by unmasking its fusion peptide. Functionally, surface protein gp120 (SU) may target the virus to gut-associated lymphoid tissue (GALT) by binding host ITGA4/ITGB7 (alpha-4/beta-7 integrins), a complex that mediates T-cell migration to the GALT. Interaction between gp120 and ITGA4/ITGB7 would allow the virus to enter GALT early in the infection, infecting and killing most of GALT's resting CD4+ T-cells. This T-cell depletion is believed to be the major insult to the host immune system leading to AIDS. The surface protein gp120 is a ligand for CD209/DC-SIGN and CLEC4M/DC-SIGNR, which are respectively found on dendritic cells (DCs), and on endothelial cells of liver sinusoids and lymph node sinuses. These interactions allow capture of viral particles at mucosal surfaces by these cells and subsequent transmission to permissive cells. DCs are professional antigen presenting cells, critical for host immunity by inducing specific immune responses against a broad variety of pathogens. They act as sentinels in various tissues where they take up antigen, process it, and present it to T-cells following migration to lymphoid organs. SIV subverts the migration properties of dendritic cells to gain access to CD4+ T-cells in lymph nodes. Virus transmission to permissive T-cells occurs either in trans (without DCs infection, through viral capture and transmission), or in cis (following DCs productive infection, through the usual CD4-gp120 interaction), thereby inducing a robust infection. In trans infection, bound virions remain infectious over days and it is proposed that they are not degraded, but protected in non-lysosomal acidic organelles within the DCs close to the cell membrane thus contributing to the viral infectious potential during DCs' migration from the periphery to the lymphoid tissues. On arrival at lymphoid tissues, intact virions recycle back to DCs' cell surface allowing virus transmission to CD4+ T-cells. Virion capture also seems to lead to MHC-II-restricted viral antigen presentation, and probably to the activation of SIV-specific CD4+ cells. In terms of biological role, the transmembrane protein gp41 (TM) acts as a class I viral fusion protein. Under the current model, the protein has at least 3 conformational states: pre-fusion native state, pre-hairpin intermediate state, and post-fusion hairpin state. During fusion of viral and target intracellular membranes, the coiled coil regions (heptad repeats) assume a trimer-of-hairpins structure, positioning the fusion peptide in close proximity to the C-terminal region of the ectodomain. The formation of this structure appears to drive apposition and subsequent fusion of viral and target cell membranes. Complete fusion occurs in host cell endosomes. The virus undergoes clathrin-dependent internalization long before endosomal fusion, thus minimizing the surface exposure of conserved viral epitopes during fusion and reducing the efficacy of inhibitors targeting these epitopes. Membranes fusion leads to delivery of the nucleocapsid into the cytoplasm. Its function is as follows. The envelope glycoprotein gp160 precursor down-modulates cell surface CD4 antigen by interacting with it in the endoplasmic reticulum and blocking its transport to the cell surface. Functionally, the gp120-gp41 heterodimer allows rapid transcytosis of the virus through CD4 negative cells such as simple epithelial monolayers of the intestinal, rectal and endocervical epithelial barriers. Both gp120 and gp41 specifically recognize glycosphingolipids galactosyl-ceramide (GalCer) or 3' sulfo-galactosyl-ceramide (GalS) present in the lipid rafts structures of epithelial cells. Binding to these alternative receptors allows the rapid transcytosis of the virus through the epithelial cells. This transcytotic vesicle-mediated transport of virions from the apical side to the basolateral side of the epithelial cells does not involve infection of the cells themselves. This chain is Envelope glycoprotein gp160 (env), found in Simian immunodeficiency virus (isolate K6W) (SIV-mac).